Reading from the N-terminus, the 504-residue chain is Glucose-6-phosphate isomerase (504 aa).

The active-site Proton donor is the Glu333. Active-site residues include His364 and Lys473.

Belongs to the GPI family.

The protein localises to the cytoplasm. It carries out the reaction alpha-D-glucose 6-phosphate = beta-D-fructose 6-phosphate. It functions in the pathway carbohydrate biosynthesis; gluconeogenesis. The protein operates within carbohydrate degradation; glycolysis; D-glyceraldehyde 3-phosphate and glycerone phosphate from D-glucose: step 2/4. In terms of biological role, catalyzes the reversible isomerization of glucose-6-phosphate to fructose-6-phosphate. In Xanthomonas euvesicatoria pv. vesicatoria (strain 85-10) (Xanthomonas campestris pv. vesicatoria), this protein is Glucose-6-phosphate isomerase.